A 211-amino-acid chain; its full sequence is tRNA (guanine-N(7)-)-methyltransferase (211 aa).

S-adenosyl-L-methionine is bound by residues glutamate 43, aspartate 68, and asparagine 117. Residues lysine 121, aspartate 153, and 190–193 (TEYE) contribute to the substrate site.

The protein belongs to the class I-like SAM-binding methyltransferase superfamily. TrmB family.

It carries out the reaction guanosine(46) in tRNA + S-adenosyl-L-methionine = N(7)-methylguanosine(46) in tRNA + S-adenosyl-L-homocysteine. It participates in tRNA modification; N(7)-methylguanine-tRNA biosynthesis. Catalyzes the formation of N(7)-methylguanine at position 46 (m7G46) in tRNA. The sequence is that of tRNA (guanine-N(7)-)-methyltransferase from Clostridium acetobutylicum (strain ATCC 824 / DSM 792 / JCM 1419 / IAM 19013 / LMG 5710 / NBRC 13948 / NRRL B-527 / VKM B-1787 / 2291 / W).